Consider the following 424-residue polypeptide: Serine--tRNA ligase (424 aa).

Thr-230–Glu-232 is an L-serine binding site. ATP-binding positions include Arg-261 to Glu-263 and Val-277. Position 284 (Glu-284) interacts with L-serine. Position 348-351 (Glu-348–Ser-351) interacts with ATP. Position 382 (Thr-382) interacts with L-serine.

This sequence belongs to the class-II aminoacyl-tRNA synthetase family. Type-1 seryl-tRNA synthetase subfamily. Homodimer. The tRNA molecule binds across the dimer.

It is found in the cytoplasm. The enzyme catalyses tRNA(Ser) + L-serine + ATP = L-seryl-tRNA(Ser) + AMP + diphosphate + H(+). The catalysed reaction is tRNA(Sec) + L-serine + ATP = L-seryl-tRNA(Sec) + AMP + diphosphate + H(+). It participates in aminoacyl-tRNA biosynthesis; selenocysteinyl-tRNA(Sec) biosynthesis; L-seryl-tRNA(Sec) from L-serine and tRNA(Sec): step 1/1. Functionally, catalyzes the attachment of serine to tRNA(Ser). Is also able to aminoacylate tRNA(Sec) with serine, to form the misacylated tRNA L-seryl-tRNA(Sec), which will be further converted into selenocysteinyl-tRNA(Sec). The sequence is that of Serine--tRNA ligase from Nocardioides sp. (strain ATCC BAA-499 / JS614).